Consider the following 147-residue polypeptide: Hemoglobin subunit epsilon (147 aa).

The 145-residue stretch at 3-147 (HFTAEEKAAV…VAIALAHKYH (145 aa)) folds into the Globin domain. A phosphoserine mark is found at Ser14 and Ser51. Residues His64 and His93 each coordinate heme b.

Belongs to the globin family. In terms of assembly, heterotetramer of two alpha chains and two epsilon chains in early embryonic hemoglobin Gower-2; two zeta chains and two epsilon chains in early embryonic hemoglobin Gower-1. Red blood cells.

In terms of biological role, the epsilon chain is a beta-type chain of early mammalian embryonic hemoglobin. This is Hemoglobin subunit epsilon (HBE1) from Pan paniscus (Pygmy chimpanzee).